Here is a 523-residue protein sequence, read N- to C-terminus: Exodeoxyribonuclease 7 large subunit (523 aa).

Positions 502-523 (PGASPAARTRAGKAKADQGSLF) are disordered.

Belongs to the XseA family. Heterooligomer composed of large and small subunits.

Its subcellular location is the cytoplasm. It carries out the reaction Exonucleolytic cleavage in either 5'- to 3'- or 3'- to 5'-direction to yield nucleoside 5'-phosphates.. Functionally, bidirectionally degrades single-stranded DNA into large acid-insoluble oligonucleotides, which are then degraded further into small acid-soluble oligonucleotides. The chain is Exodeoxyribonuclease 7 large subunit from Rhodospirillum centenum (strain ATCC 51521 / SW).